Here is a 341-residue protein sequence, read N- to C-terminus: Ketol-acid reductoisomerase (NADP(+)) (341 aa).

The KARI N-terminal Rossmann domain occupies 1 to 182 (MTEMFYDDDA…GGTRAGVIKT (182 aa)). NADP(+)-binding positions include 25–28 (YGSQ), Lys-48, Ser-51, Ser-53, and 83–86 (DQHQ). The active site involves His-108. Residue Gly-134 coordinates NADP(+). One can recognise a KARI C-terminal knotted domain in the interval 183–328 (TFTEETETDL…RELRSLFSWQ (146 aa)). 4 residues coordinate Mg(2+): Asp-191, Glu-195, Glu-227, and Glu-231. Ser-252 serves as a coordination point for substrate.

This sequence belongs to the ketol-acid reductoisomerase family. Mg(2+) is required as a cofactor.

It catalyses the reaction (2R)-2,3-dihydroxy-3-methylbutanoate + NADP(+) = (2S)-2-acetolactate + NADPH + H(+). It carries out the reaction (2R,3R)-2,3-dihydroxy-3-methylpentanoate + NADP(+) = (S)-2-ethyl-2-hydroxy-3-oxobutanoate + NADPH + H(+). It functions in the pathway amino-acid biosynthesis; L-isoleucine biosynthesis; L-isoleucine from 2-oxobutanoate: step 2/4. It participates in amino-acid biosynthesis; L-valine biosynthesis; L-valine from pyruvate: step 2/4. Its function is as follows. Involved in the biosynthesis of branched-chain amino acids (BCAA). Catalyzes an alkyl-migration followed by a ketol-acid reduction of (S)-2-acetolactate (S2AL) to yield (R)-2,3-dihydroxy-isovalerate. In the isomerase reaction, S2AL is rearranged via a Mg-dependent methyl migration to produce 3-hydroxy-3-methyl-2-ketobutyrate (HMKB). In the reductase reaction, this 2-ketoacid undergoes a metal-dependent reduction by NADPH to yield (R)-2,3-dihydroxy-isovalerate. The polypeptide is Ketol-acid reductoisomerase (NADP(+)) (Pseudarthrobacter chlorophenolicus (strain ATCC 700700 / DSM 12829 / CIP 107037 / JCM 12360 / KCTC 9906 / NCIMB 13794 / A6) (Arthrobacter chlorophenolicus)).